A 726-amino-acid chain; its full sequence is Dipeptidyl-peptidase 5 (726 aa).

An N-terminal signal peptide occupies residues 1–19 (MAAAKWLIASLAFASSGLA). N-linked (GlcNAc...) asparagine glycosylation is found at Asn96 and Asn252. The disordered stretch occupies residues 269 to 291 (AEPINKRNGPRTPQAIEGASSSP). Catalysis depends on Ser558, which acts as the Charge relay system. N-linked (GlcNAc...) asparagine glycosylation occurs at Asn605. Catalysis depends on charge relay system residues Asp641 and His673. Asn699 carries an N-linked (GlcNAc...) asparagine glycan.

This sequence belongs to the peptidase S9C family.

The protein resides in the secreted. Its function is as follows. Extracellular dipeptidyl-peptidase which removes N-terminal dipeptides sequentially from polypeptides having unsubstituted N-termini. Contributes to pathogenicity. The chain is Dipeptidyl-peptidase 5 (DPP5) from Trichophyton equinum (Horse ringworm fungus).